The following is a 428-amino-acid chain: tRNA modification GTPase MnmE (428 aa).

3 residues coordinate (6S)-5-formyl-5,6,7,8-tetrahydrofolate: arginine 20, glutamate 77, and lysine 117. In terms of domain architecture, TrmE-type G spans 213–351 (GFEVAIIGPP…LVQRISDVLK (139 aa)). K(+) is bound at residue asparagine 223. GTP contacts are provided by residues 223–228 (NAGKST), 242–248 (SEVAGTT), and 267–270 (DTAG). Serine 227 is a Mg(2+) binding site. Residues serine 242, valine 244, and threonine 247 each contribute to the K(+) site. Threonine 248 lines the Mg(2+) pocket. Lysine 428 lines the (6S)-5-formyl-5,6,7,8-tetrahydrofolate pocket.

This sequence belongs to the TRAFAC class TrmE-Era-EngA-EngB-Septin-like GTPase superfamily. TrmE GTPase family. As to quaternary structure, homodimer. Heterotetramer of two MnmE and two MnmG subunits. Requires K(+) as cofactor.

Its subcellular location is the cytoplasm. Its function is as follows. Exhibits a very high intrinsic GTPase hydrolysis rate. Involved in the addition of a carboxymethylaminomethyl (cmnm) group at the wobble position (U34) of certain tRNAs, forming tRNA-cmnm(5)s(2)U34. The sequence is that of tRNA modification GTPase MnmE from Ruegeria pomeroyi (strain ATCC 700808 / DSM 15171 / DSS-3) (Silicibacter pomeroyi).